The primary structure comprises 201 residues: UPF0056 membrane protein PYRAB13050 (201 aa).

6 helical membrane-spanning segments follow: residues 8–28 (FAVL…VPIF), 49–69 (ITVL…FKFF), 73–93 (VDAF…EMLS), 111–131 (VAVI…TTVM), 140–160 (PIVI…LASG), and 181–201 (LILT…AFGI).

It belongs to the UPF0056 (MarC) family.

It is found in the cell membrane. In Pyrococcus abyssi (strain GE5 / Orsay), this protein is UPF0056 membrane protein PYRAB13050.